Reading from the N-terminus, the 215-residue chain is Octanoyltransferase (215 aa).

The BPL/LPL catalytic domain maps to 33-209 (PDTPDQLWLV…QFARKLGYET (177 aa)). Residues 72 to 79 (RGGQVTYH), 139 to 141 (SLG), and 152 to 154 (GLA) contribute to the substrate site. Residue cysteine 170 is the Acyl-thioester intermediate of the active site.

This sequence belongs to the LipB family.

The protein localises to the cytoplasm. It carries out the reaction octanoyl-[ACP] + L-lysyl-[protein] = N(6)-octanoyl-L-lysyl-[protein] + holo-[ACP] + H(+). Its pathway is protein modification; protein lipoylation via endogenous pathway; protein N(6)-(lipoyl)lysine from octanoyl-[acyl-carrier-protein]: step 1/2. Its function is as follows. Catalyzes the transfer of endogenously produced octanoic acid from octanoyl-acyl-carrier-protein onto the lipoyl domains of lipoate-dependent enzymes. Lipoyl-ACP can also act as a substrate although octanoyl-ACP is likely to be the physiological substrate. This chain is Octanoyltransferase, found in Cellvibrio japonicus (strain Ueda107) (Pseudomonas fluorescens subsp. cellulosa).